The primary structure comprises 479 residues: Gamma-aminobutyric acid receptor subunit rho-1 (479 aa).

The signal sequence occupies residues Met-1–Ala-21. At Thr-22–His-280 the chain is on the extracellular side. Residues Glu-32–Lys-55 are disordered. Residues Gln-45–Lys-55 show a composition bias toward basic and acidic residues. Arg-125 contributes to the 4-aminobutanoate binding site. Asn-140 carries an N-linked (GlcNAc...) asparagine glycan. Ser-189 serves as a coordination point for 4-aminobutanoate. A disulfide bridge connects residues Cys-198 and Cys-212. A 4-aminobutanoate-binding site is contributed by Glu-217. Residues Asn-234 and Asn-274 are each glycosylated (N-linked (GlcNAc...) asparagine). The chain crosses the membrane as a helical span at residues Ile-281–Val-301. Over Ser-302 to Arg-313 the chain is Cytoplasmic. A helical transmembrane segment spans residues Val-314–Ser-334. The Extracellular portion of the chain corresponds to Met-335–Asp-345. The chain crosses the membrane as a helical span at residues Ile-346–Asn-366. The Cytoplasmic portion of the chain corresponds to Tyr-367–Lys-457. Residues Tyr-458–Phe-478 traverse the membrane as a helical segment. Position 479 (Ser-479) is a topological domain, extracellular.

It belongs to the ligand-gated ion channel (TC 1.A.9) family. Gamma-aminobutyric acid receptor (TC 1.A.9.5) subfamily. GABRR1 sub-subfamily. In terms of assembly, three rho subunits (rho-1/GBRR1, rho-2/GBRR2 and rho-3/GBRR3) coassemble either to form functional homopentamers or heteropentamers. Rho-1/GBRR1 subunits can also associate with alpha-1/GBRA1 subunits to form a functional GABAAR. Interacts with SQSTM1. Highly expressed in the retina. Expressed in a lesser extent in brain, lung and thymus.

Its subcellular location is the postsynaptic cell membrane. It localises to the cell membrane. It catalyses the reaction chloride(in) = chloride(out). Its activity is regulated as follows. Inhibited by TPMPA, a rho-specific antagonist, when forming a homopentamer. In contrast with other GABAARs, rho-1 GABAAR is not inhibited by bicuculline, when forming a homopentamer. Rho subunit of the pentameric ligand-gated chloride channels responsible for mediating the effects of gamma-aminobutyric acid (GABA), the major inhibitory neurotransmitter in the brain. Rho-containing GABA-gated chloride channels are a subclass of GABA(A) receptors (GABAARs) entirely composed of rho subunits, where GABA molecules bind at the rho intersubunit interfaces. When activated by GABA, rho-GABAARs selectively allow the flow of chloride anions across the cell membrane down their electrochemical gradient. Rho-1 subunits are primarily expressed in retina where rho-1-containing GABAARs may play a role in retinal neurotransmission. Rho-1 GABAARs are also involved in neuronal tonic (extrasynaptic) and phasic (synaptic) transmission in the Purkinje neurons of the cerebellum. Rho-1 GABAARs may also contribute to the regulation of glial development in the cerebellum by controlling extrasynaptic transmission. This is Gamma-aminobutyric acid receptor subunit rho-1 from Homo sapiens (Human).